Here is a 33-residue protein sequence, read N- to C-terminus: Cytochrome c oxidase subunit 5B liver, mitochondrial (33 aa).

The protein belongs to the cytochrome c oxidase subunit 5B family. Component of the cytochrome c oxidase (complex IV, CIV), a multisubunit enzyme composed of 14 subunits. The complex is composed of a catalytic core of 3 subunits MT-CO1, MT-CO2 and MT-CO3, encoded in the mitochondrial DNA, and 11 supernumerary subunits COX4I, COX5A, COX5B, COX6A, COX6B, COX6C, COX7A, COX7B, COX7C, COX8 and NDUFA4, which are encoded in the nuclear genome. The complex exists as a monomer or a dimer and forms supercomplexes (SCs) in the inner mitochondrial membrane with NADH-ubiquinone oxidoreductase (complex I, CI) and ubiquinol-cytochrome c oxidoreductase (cytochrome b-c1 complex, complex III, CIII), resulting in different assemblies (supercomplex SCI(1)III(2)IV(1) and megacomplex MCI(2)III(2)IV(2)).

It localises to the mitochondrion inner membrane. It participates in energy metabolism; oxidative phosphorylation. In terms of biological role, component of the cytochrome c oxidase, the last enzyme in the mitochondrial electron transport chain which drives oxidative phosphorylation. The respiratory chain contains 3 multisubunit complexes succinate dehydrogenase (complex II, CII), ubiquinol-cytochrome c oxidoreductase (cytochrome b-c1 complex, complex III, CIII) and cytochrome c oxidase (complex IV, CIV), that cooperate to transfer electrons derived from NADH and succinate to molecular oxygen, creating an electrochemical gradient over the inner membrane that drives transmembrane transport and the ATP synthase. Cytochrome c oxidase is the component of the respiratory chain that catalyzes the reduction of oxygen to water. Electrons originating from reduced cytochrome c in the intermembrane space (IMS) are transferred via the dinuclear copper A center (CU(A)) of subunit 2 and heme A of subunit 1 to the active site in subunit 1, a binuclear center (BNC) formed by heme A3 and copper B (CU(B)). The BNC reduces molecular oxygen to 2 water molecules using 4 electrons from cytochrome c in the IMS and 4 protons from the mitochondrial matrix. The polypeptide is Cytochrome c oxidase subunit 5B liver, mitochondrial (Oncorhynchus mykiss (Rainbow trout)).